Consider the following 175-residue polypeptide: Probable S-adenosyl-L-methionine-binding protein VirR (175 aa).

The 131-residue stretch at 35 to 165 (LFFVGKIRTP…DRSLSKPLAP (131 aa)) folds into the TsaA-like domain. Residues 52 to 54 (PRQ), 90 to 91 (HE), R114, T124, and 145 to 148 (LDGT) each bind S-adenosyl-L-methionine.

The protein belongs to the tRNA methyltransferase O family.

This Rhizobium radiobacter (Agrobacterium tumefaciens) protein is Probable S-adenosyl-L-methionine-binding protein VirR (virR).